Consider the following 588-residue polypeptide: uncharacterized protein (588 aa).

A signal peptide spans 1–19 (MRSTAYLTALLSFLGATHA). Residues Asn-45 and Asn-104 are each glycosylated (N-linked (GlcNAc...) asparagine). One can recognise an FAD-binding PCMH-type domain in the interval 118 to 303 (GQGRIPLYSA…TSVTLRTFKD (186 aa)). At His-156 the chain carries Pros-8alpha-FAD histidine. 6 N-linked (GlcNAc...) asparagine glycosylation sites follow: Asn-179, Asn-312, Asn-320, Asn-351, Asn-370, and Asn-446.

It belongs to the oxygen-dependent FAD-linked oxidoreductase family. It depends on FAD as a cofactor.

The protein localises to the secreted. This is an uncharacterized protein from Arthroderma benhamiae (strain ATCC MYA-4681 / CBS 112371) (Trichophyton mentagrophytes).